A 346-amino-acid chain; its full sequence is O-methyltransferase atr3 (346 aa).

Disordered regions lie at residues 1–22 (MTSV…DDLM) and 52–88 (GLKS…WYHA). Residues 190–191 (DL) and 217–218 (DI) contribute to the S-adenosyl-L-methionine site.

This sequence belongs to the class I-like SAM-binding methyltransferase superfamily. As to quaternary structure, homodimer.

The enzyme catalyses 4-O-demethylbarbatate + S-adenosyl-L-methionine = proatranorin I + S-adenosyl-L-homocysteine. It participates in secondary metabolite biosynthesis; terpenoid biosynthesis. In terms of biological role, O-methyltransferase; part of the gene cluster that mediates the biosynthesis of atranorin, a depside of polyketide origin that accumulates in the cortical or medullary layers of lichen thalli. Atr3 methylates the carboxyl group of 4-O-demethylbarbatic acid to yield proatranorin I. Atr3 is also able to methylate the atr2 product proatranorin III to produce the final compound atranorin. The first step in the pathway is performed by the non-reducing polyketide synthase atr1 that produces 4-O-demethylbarbatic acid composed of two 3-methylorsellinic acid (3MOA) moieties. The pathway continues with the actions of the cytochrome P450 monooygenase atr2 that catalizes the oxidation of c-9 and the O-methyltransferase atr3 that performs the methylation of the carboxyl group to yield atranorin, via the proatranorin II and III intermediates if atr2 acts first, or the proatranorin I intermediate if atr3 acts first. The sequence is that of O-methyltransferase atr3 from Stereocaulon alpinum (Alpine snow lichen).